Here is a 376-residue protein sequence, read N- to C-terminus: Serine/threonine-protein kinase-transforming protein mos (376 aa).

One can recognise a Protein kinase domain in the interval 94-376 (VCLMHRLGSG…KALADSIEPM (283 aa)). ATP is bound by residues 100–108 (LGSGGFGSV) and Lys121. Asp229 functions as the Proton acceptor in the catalytic mechanism.

This sequence belongs to the protein kinase superfamily. Ser/Thr protein kinase family.

It carries out the reaction L-seryl-[protein] + ATP = O-phospho-L-seryl-[protein] + ADP + H(+). The enzyme catalyses L-threonyl-[protein] + ATP = O-phospho-L-threonyl-[protein] + ADP + H(+). The chain is Serine/threonine-protein kinase-transforming protein mos (V-MOS) from Moloney murine sarcoma virus (strain m1) (MoMSV).